A 366-amino-acid chain; its full sequence is Tubulin-like protein CetZ (366 aa).

GTP-binding positions include 10-14, 103-105, Glu-136, Asn-163, and Asn-181; these read QCGTK and GTG.

It belongs to the CetZ family.

Its subcellular location is the cytoplasm. In terms of biological role, involved in cell shape control. The chain is Tubulin-like protein CetZ from Pyrococcus furiosus (strain ATCC 43587 / DSM 3638 / JCM 8422 / Vc1).